The chain runs to 882 residues: MTELSPKYNPAEVEAGRYQKWLDADVFKPSGDQKAKPYSIVIPPPNVTGKLHLGHAWDTTLQDIIIRQKRMQGFDTLWLPGMDHAGIATQAKVEERLREQGISRYDLGRDKFLDKVWEWKDEYATTIKEQWGKMGLSVDYSRERFTLDEGLSKAVRKVFVDLYKKGWIYRGEFIINWDPAARTALSDIEVVHKDVEGAFYHMNYMLEDGSRALQVATTRPETMFGDVAVAVNPEDPRYKDLIGKHVLLPIVNKLIPIVGDEHADPEFGTGVVKITPAHDPNDFEVGQRHNLPQVNVMNDDGTMNELAGDFAGMDRFEARQATVAKLEELGALVNIEKRVHSVGHSERSGAVVEPRLSTQWFVKMDELAKQAMDNQETDDRVDFYPPRFNDTFLQWMENVHDWVISRQLWWGHQIPAWYNAEGEIYVGEEAPEGDGWTQDEDVLDTWFSSALWPFSTMGWPDTDSEDFKRYFPTSTLVTGYDIIFFWVSRMIFQSLEFTERQPFQNVLIHGLIRDEEGRKMSKSLGNGIDPMDVIEKYGADSLRWFLSNGSAPGQDVRFSYEKMDASWNFINKIWNISRYILMNNEGLTLEEAESNVAKVAASEAGNVTDQWILHNLNETIAKVTENFDKFEFGVAGHILYNFIWEEFANWYVELTKEVLYSDNEAEKVITRSVLLYTLDKILRLLHPIMPFVTEEIYAQYAQGSIVTAAYPTVTPAFENEAAHKGVESLKDFIRAVRNARAEVNVAPSKPITILVKTADSELEDFFNSNINYIKRFTNPEKLEISSAIAAPELAMTSIITGAEIYLPLADLLNVEEELARLDKELAKWQKELDMVGKKLGNERFVANAKPEVVQKEKDKQADYQAKYDATQERIVEMHKLVK.

The short motif at 45–55 (PNVTGKLHLGH) is the 'HIGH' region element. A 'KMSKS' region motif is present at residues 519 to 523 (KMSKS). Lys-522 lines the ATP pocket. Residues 808–877 (LADLLNVEEE…DATQERIVEM (70 aa)) adopt a coiled-coil conformation.

It belongs to the class-I aminoacyl-tRNA synthetase family. ValS type 1 subfamily. Monomer.

The protein resides in the cytoplasm. The catalysed reaction is tRNA(Val) + L-valine + ATP = L-valyl-tRNA(Val) + AMP + diphosphate. Catalyzes the attachment of valine to tRNA(Val). As ValRS can inadvertently accommodate and process structurally similar amino acids such as threonine, to avoid such errors, it has a 'posttransfer' editing activity that hydrolyzes mischarged Thr-tRNA(Val) in a tRNA-dependent manner. This is Valine--tRNA ligase from Streptococcus pyogenes serotype M6 (strain ATCC BAA-946 / MGAS10394).